The chain runs to 120 residues: uncharacterized protein (120 aa).

A helical membrane pass occupies residues 93–109 (LCVGISTTMIIQVLFLL).

The protein localises to the membrane. This is an uncharacterized protein from Saccharomyces cerevisiae (strain ATCC 204508 / S288c) (Baker's yeast).